Consider the following 23-residue polypeptide: Putative gene 50 protein (23 aa).

The chain is Putative gene 50 protein (50) from Bacillus subtilis (Bacteriophage SP01).